Reading from the N-terminus, the 125-residue chain is Small ribosomal subunit protein eS6 (125 aa).

Belongs to the eukaryotic ribosomal protein eS6 family.

This Pyrococcus horikoshii (strain ATCC 700860 / DSM 12428 / JCM 9974 / NBRC 100139 / OT-3) protein is Small ribosomal subunit protein eS6.